The primary structure comprises 863 residues: FO synthase (863 aa).

2 Radical SAM core domains span residues 91-343 (ITYS…APPN) and 551-792 (VTFV…SHIQ). A cofG-like region spans residues 92–424 (TYSRKVFIPV…PRVRGHVVAL (333 aa)). [4Fe-4S] cluster contacts are provided by C105, C109, C112, C565, C569, and C572. The segment at 528–861 (DGPALEAVTA…RQRTTTYALR (334 aa)) is cofH-like.

It in the N-terminal section; belongs to the radical SAM superfamily. CofG family. The protein in the C-terminal section; belongs to the radical SAM superfamily. CofH family. The cofactor is [4Fe-4S] cluster.

The enzyme catalyses 5-amino-6-(D-ribitylamino)uracil + L-tyrosine + S-adenosyl-L-methionine = 5-amino-5-(4-hydroxybenzyl)-6-(D-ribitylimino)-5,6-dihydrouracil + 2-iminoacetate + 5'-deoxyadenosine + L-methionine + H(+). It carries out the reaction 5-amino-5-(4-hydroxybenzyl)-6-(D-ribitylimino)-5,6-dihydrouracil + S-adenosyl-L-methionine = 7,8-didemethyl-8-hydroxy-5-deazariboflavin + 5'-deoxyadenosine + L-methionine + NH4(+) + H(+). Its pathway is cofactor biosynthesis; coenzyme F0 biosynthesis. Its function is as follows. Catalyzes the radical-mediated synthesis of 7,8-didemethyl-8-hydroxy-5-deazariboflavin (FO) from 5-amino-6-(D-ribitylamino)uracil and L-tyrosine. The sequence is that of FO synthase (fbiC) from Mycobacterium leprae (strain TN).